Reading from the N-terminus, the 393-residue chain is NAD(P)H-quinone oxidoreductase subunit H, chloroplastic (393 aa).

This sequence belongs to the complex I 49 kDa subunit family. In terms of assembly, NDH is composed of at least 16 different subunits, 5 of which are encoded in the nucleus.

It localises to the plastid. Its subcellular location is the chloroplast thylakoid membrane. It carries out the reaction a plastoquinone + NADH + (n+1) H(+)(in) = a plastoquinol + NAD(+) + n H(+)(out). The enzyme catalyses a plastoquinone + NADPH + (n+1) H(+)(in) = a plastoquinol + NADP(+) + n H(+)(out). Its function is as follows. NDH shuttles electrons from NAD(P)H:plastoquinone, via FMN and iron-sulfur (Fe-S) centers, to quinones in the photosynthetic chain and possibly in a chloroplast respiratory chain. The immediate electron acceptor for the enzyme in this species is believed to be plastoquinone. Couples the redox reaction to proton translocation, and thus conserves the redox energy in a proton gradient. The protein is NAD(P)H-quinone oxidoreductase subunit H, chloroplastic of Brachypodium distachyon (Purple false brome).